Here is a 211-residue protein sequence, read N- to C-terminus: Peptidyl-prolyl cis-trans isomerase FKBP14 (211 aa).

Residues 1 to 19 (MRLFLWNAVLTLFVTSLIG) form the signal peptide. An intrachain disulfide couples Cys38 to Cys96. The 91-residue stretch at 45 to 135 (GDLMLVHYEG…IFNIDLLEIR (91 aa)) folds into the PPIase FKBP-type domain. The 36-residue stretch at 135 to 170 (RNGPRSHESFQEMDLNDDWKLSKDEVKAYLKKEFEK) folds into the EF-hand 1 domain. Ca(2+)-binding residues include Asp148, Asn150, Asp152, Lys154, and Glu159. N-linked (GlcNAc...) asparagine glycosylation is present at Asn176. An EF-hand 2 domain is found at 179–211 (HHDALVEDIFDKEDEDKDGFISAREFTYKHDEL). Residues Asp192, Asp194, Asp196, Phe198, and Glu203 each contribute to the Ca(2+) site. The Prevents secretion from ER motif lies at 208 to 211 (HDEL).

In terms of assembly, monomer. Homodimer. Interacts with type III, type IV and type X collagens.

The protein localises to the endoplasmic reticulum lumen. It carries out the reaction [protein]-peptidylproline (omega=180) = [protein]-peptidylproline (omega=0). With respect to regulation, inhibited by tacrolimus/FK506. PPIase which accelerates the folding of proteins during protein synthesis. Has a preference for substrates containing 4-hydroxylproline modifications, including type III collagen. May also target type VI and type X collagens. The polypeptide is Peptidyl-prolyl cis-trans isomerase FKBP14 (FKBP14) (Homo sapiens (Human)).